A 314-amino-acid polypeptide reads, in one-letter code: Serine/threonine-protein phosphatase PP-Y (314 aa).

Aspartate 60, histidine 62, aspartate 88, and asparagine 120 together coordinate Mn(2+). The active-site Proton donor is the histidine 121. Mn(2+)-binding residues include histidine 169 and histidine 244.

It belongs to the PPP phosphatase family. PP-Y subfamily. The cofactor is Mn(2+).

It catalyses the reaction O-phospho-L-seryl-[protein] + H2O = L-seryl-[protein] + phosphate. It carries out the reaction O-phospho-L-threonyl-[protein] + H2O = L-threonyl-[protein] + phosphate. The chain is Serine/threonine-protein phosphatase PP-Y (PpY-55A) from Drosophila melanogaster (Fruit fly).